The following is a 385-amino-acid chain: tRNA-specific 2-thiouridylase MnmA (385 aa).

ATP is bound by residues 12 to 19 (GLSGGVDS) and Met38. The segment at 108-110 (NPD) is interaction with target base in tRNA. Catalysis depends on Cys113, which acts as the Nucleophile. Cys113 and Cys210 form a disulfide bridge. Gly138 lines the ATP pocket. Residues 160 to 162 (KDQ) form an interaction with tRNA region. Cys210 acts as the Cysteine persulfide intermediate in catalysis.

The protein belongs to the MnmA/TRMU family.

The protein resides in the cytoplasm. The enzyme catalyses S-sulfanyl-L-cysteinyl-[protein] + uridine(34) in tRNA + AH2 + ATP = 2-thiouridine(34) in tRNA + L-cysteinyl-[protein] + A + AMP + diphosphate + H(+). In terms of biological role, catalyzes the 2-thiolation of uridine at the wobble position (U34) of tRNA, leading to the formation of s(2)U34. The polypeptide is tRNA-specific 2-thiouridylase MnmA (Ureaplasma parvum serovar 3 (strain ATCC 27815 / 27 / NCTC 11736)).